The following is a 184-amino-acid chain: Probable RNA 2'-phosphotransferase (184 aa).

It belongs to the KptA/TPT1 family.

Functionally, removes the 2'-phosphate from RNA via an intermediate in which the phosphate is ADP-ribosylated by NAD followed by a presumed transesterification to release the RNA and generate ADP-ribose 1''-2''-cyclic phosphate (APPR&gt;P). May function as an ADP-ribosylase. The protein is Probable RNA 2'-phosphotransferase of Rhizobium leguminosarum bv. trifolii (strain WSM2304).